A 361-amino-acid polypeptide reads, in one-letter code: Phospho-N-acetylmuramoyl-pentapeptide-transferase (361 aa).

The next 10 membrane-spanning stretches (helical) occupy residues 26–46, 73–93, 98–118, 139–159, 168–188, 200–220, 237–257, 264–284, 289–309, and 339–359; these read SILA…VLIQ, TMGG…WGDL, VWLV…DDWI, IFGL…AAVT, IALP…IVGF, GLAI…AYAS, AGDL…FLWF, VFMG…IAVI, LVLV…IIQV, and VIVR…ATLK.

This sequence belongs to the glycosyltransferase 4 family. MraY subfamily. It depends on Mg(2+) as a cofactor.

The protein resides in the cell inner membrane. It carries out the reaction UDP-N-acetyl-alpha-D-muramoyl-L-alanyl-gamma-D-glutamyl-meso-2,6-diaminopimeloyl-D-alanyl-D-alanine + di-trans,octa-cis-undecaprenyl phosphate = di-trans,octa-cis-undecaprenyl diphospho-N-acetyl-alpha-D-muramoyl-L-alanyl-D-glutamyl-meso-2,6-diaminopimeloyl-D-alanyl-D-alanine + UMP. It functions in the pathway cell wall biogenesis; peptidoglycan biosynthesis. Its function is as follows. Catalyzes the initial step of the lipid cycle reactions in the biosynthesis of the cell wall peptidoglycan: transfers peptidoglycan precursor phospho-MurNAc-pentapeptide from UDP-MurNAc-pentapeptide onto the lipid carrier undecaprenyl phosphate, yielding undecaprenyl-pyrophosphoryl-MurNAc-pentapeptide, known as lipid I. The protein is Phospho-N-acetylmuramoyl-pentapeptide-transferase of Xylella fastidiosa (strain 9a5c).